The primary structure comprises 506 residues: Deoxyguanosinetriphosphate triphosphohydrolase (506 aa).

An HD domain is found at 66-274; the sequence is RLTHSLEVQQ…MEAADDISYC (209 aa).

The protein belongs to the dGTPase family. Type 1 subfamily. Homotetramer. Requires Mg(2+) as cofactor.

It catalyses the reaction dGTP + H2O = 2'-deoxyguanosine + triphosphate + H(+). In terms of biological role, dGTPase preferentially hydrolyzes dGTP over the other canonical NTPs. This Yersinia pestis bv. Antiqua (strain Antiqua) protein is Deoxyguanosinetriphosphate triphosphohydrolase.